A 160-amino-acid chain; its full sequence is Cytochrome b6-f complex subunit 4 (160 aa).

3 consecutive transmembrane segments (helical) span residues 36–56 (IFYM…GLAV), 96–116 (LGVL…FIKI), and 131–151 (TVFL…ALPI).

Belongs to the cytochrome b family. PetD subfamily. As to quaternary structure, the 4 large subunits of the cytochrome b6-f complex are cytochrome b6, subunit IV (17 kDa polypeptide, petD), cytochrome f and the Rieske protein, while the 4 small subunits are petG, petL, petM and petN. The complex functions as a dimer.

Its subcellular location is the plastid. It is found in the chloroplast thylakoid membrane. Component of the cytochrome b6-f complex, which mediates electron transfer between photosystem II (PSII) and photosystem I (PSI), cyclic electron flow around PSI, and state transitions. The sequence is that of Cytochrome b6-f complex subunit 4 from Auxenochlorella protothecoides (Green microalga).